We begin with the raw amino-acid sequence, 283 residues long: Thymidylate synthase (283 aa).

Arg-22 provides a ligand contact to dUMP. The active-site Nucleophile is Cys-160. DUMP is bound by residues Arg-180 to Asp-183, Asn-191, and His-221 to Tyr-223. (6R)-5,10-methylene-5,6,7,8-tetrahydrofolate is bound at residue Asp-183. A (6R)-5,10-methylene-5,6,7,8-tetrahydrofolate-binding site is contributed by Ser-282.

Belongs to the thymidylate synthase family. Bacterial-type ThyA subfamily. In terms of assembly, homodimer.

The protein resides in the cytoplasm. It carries out the reaction dUMP + (6R)-5,10-methylene-5,6,7,8-tetrahydrofolate = 7,8-dihydrofolate + dTMP. Its pathway is pyrimidine metabolism; dTTP biosynthesis. Its function is as follows. Catalyzes the reductive methylation of 2'-deoxyuridine-5'-monophosphate (dUMP) to 2'-deoxythymidine-5'-monophosphate (dTMP) while utilizing 5,10-methylenetetrahydrofolate (mTHF) as the methyl donor and reductant in the reaction, yielding dihydrofolate (DHF) as a by-product. This enzymatic reaction provides an intracellular de novo source of dTMP, an essential precursor for DNA biosynthesis. The sequence is that of Thymidylate synthase from Haemophilus influenzae (strain ATCC 51907 / DSM 11121 / KW20 / Rd).